The primary structure comprises 1135 residues: Exportin-6-A (1135 aa).

The 67-residue stretch at isoleucine 31–serine 97 folds into the Importin N-terminal domain.

It belongs to the exportin family. Expressed during meiotic maturation 2 hours after germinal vesicle break down (GVBD) and in unfertilized and fertilized eggs, but not in oocytes (at protein level). Expressed in somatic cells, in oocytes, during meiotic maturation and in unfertilized and fertilized eggs.

It localises to the nucleus. It is found in the cytoplasm. In terms of biological role, mediates the nuclear export of actin and profilin-actin complexes in somatic cells. Oocyte nuclei lack active actin export. The sequence is that of Exportin-6-A (xpo6-a) from Xenopus laevis (African clawed frog).